The chain runs to 431 residues: Glutamate-1-semialdehyde 2,1-aminomutase 2 (431 aa).

K268 carries the N6-(pyridoxal phosphate)lysine modification.

Belongs to the class-III pyridoxal-phosphate-dependent aminotransferase family. HemL subfamily. In terms of assembly, homodimer. The cofactor is pyridoxal 5'-phosphate.

Its subcellular location is the cytoplasm. The catalysed reaction is (S)-4-amino-5-oxopentanoate = 5-aminolevulinate. It participates in porphyrin-containing compound metabolism; protoporphyrin-IX biosynthesis; 5-aminolevulinate from L-glutamyl-tRNA(Glu): step 2/2. This Bacillus licheniformis (strain ATCC 14580 / DSM 13 / JCM 2505 / CCUG 7422 / NBRC 12200 / NCIMB 9375 / NCTC 10341 / NRRL NRS-1264 / Gibson 46) protein is Glutamate-1-semialdehyde 2,1-aminomutase 2.